We begin with the raw amino-acid sequence, 305 residues long: UDP-3-O-acyl-N-acetylglucosamine deacetylase (305 aa).

Zn(2+)-binding residues include His79, His238, and Asp242. The active-site Proton donor is His265.

Belongs to the LpxC family. It depends on Zn(2+) as a cofactor.

It carries out the reaction a UDP-3-O-[(3R)-3-hydroxyacyl]-N-acetyl-alpha-D-glucosamine + H2O = a UDP-3-O-[(3R)-3-hydroxyacyl]-alpha-D-glucosamine + acetate. It participates in glycolipid biosynthesis; lipid IV(A) biosynthesis; lipid IV(A) from (3R)-3-hydroxytetradecanoyl-[acyl-carrier-protein] and UDP-N-acetyl-alpha-D-glucosamine: step 2/6. In terms of biological role, catalyzes the hydrolysis of UDP-3-O-myristoyl-N-acetylglucosamine to form UDP-3-O-myristoylglucosamine and acetate, the committed step in lipid A biosynthesis. The sequence is that of UDP-3-O-acyl-N-acetylglucosamine deacetylase from Pasteurella multocida (strain Pm70).